The sequence spans 116 residues: Large ribosomal subunit protein uL18 (116 aa).

It belongs to the universal ribosomal protein uL18 family. As to quaternary structure, part of the 50S ribosomal subunit; part of the 5S rRNA/L5/L18/L25 subcomplex. Contacts the 5S and 23S rRNAs.

Functionally, this is one of the proteins that bind and probably mediate the attachment of the 5S RNA into the large ribosomal subunit, where it forms part of the central protuberance. The chain is Large ribosomal subunit protein uL18 from Psychrobacter arcticus (strain DSM 17307 / VKM B-2377 / 273-4).